The primary structure comprises 503 residues: Beta-amylase Tri a 17 (503 aa).

Substrate is bound by residues D51, H91, and D99. E184 acts as the Proton donor in catalysis. Substrate-binding residues include K293, H298, and T340. E378 serves as the catalytic Proton acceptor. Residues 379–380 (NA) and R418 each bind substrate.

The protein belongs to the glycosyl hydrolase 14 family.

It carries out the reaction Hydrolysis of (1-&gt;4)-alpha-D-glucosidic linkages in polysaccharides so as to remove successive maltose units from the non-reducing ends of the chains.. The protein is Beta-amylase Tri a 17 (BMY1) of Triticum aestivum (Wheat).